A 269-amino-acid polypeptide reads, in one-letter code: Formamidopyrimidine-DNA glycosylase (269 aa).

Pro2 (schiff-base intermediate with DNA) is an active-site residue. Residue Glu3 is the Proton donor of the active site. Catalysis depends on Lys57, which acts as the Proton donor; for beta-elimination activity. Residues His90, Arg109, and Lys150 each coordinate DNA. The FPG-type zinc finger occupies 235 to 269; it reads QVYGRKGEPCRVCGTPIVATKHAQRATFYCRHCQK. Residue Arg259 is the Proton donor; for delta-elimination activity of the active site.

The protein belongs to the FPG family. In terms of assembly, monomer. It depends on Zn(2+) as a cofactor.

It carries out the reaction Hydrolysis of DNA containing ring-opened 7-methylguanine residues, releasing 2,6-diamino-4-hydroxy-5-(N-methyl)formamidopyrimidine.. It catalyses the reaction 2'-deoxyribonucleotide-(2'-deoxyribose 5'-phosphate)-2'-deoxyribonucleotide-DNA = a 3'-end 2'-deoxyribonucleotide-(2,3-dehydro-2,3-deoxyribose 5'-phosphate)-DNA + a 5'-end 5'-phospho-2'-deoxyribonucleoside-DNA + H(+). Its function is as follows. Involved in base excision repair of DNA damaged by oxidation or by mutagenic agents. Acts as a DNA glycosylase that recognizes and removes damaged bases. Has a preference for oxidized purines, such as 7,8-dihydro-8-oxoguanine (8-oxoG). Has AP (apurinic/apyrimidinic) lyase activity and introduces nicks in the DNA strand. Cleaves the DNA backbone by beta-delta elimination to generate a single-strand break at the site of the removed base with both 3'- and 5'-phosphates. In Salmonella agona (strain SL483), this protein is Formamidopyrimidine-DNA glycosylase.